A 247-amino-acid polypeptide reads, in one-letter code: Probable transcriptional regulatory protein Tola_2714 (247 aa).

The segment at 1–21 (MAGHSKWANIKHRKAAQDAKR) is disordered.

The protein belongs to the TACO1 family.

The protein localises to the cytoplasm. The sequence is that of Probable transcriptional regulatory protein Tola_2714 from Tolumonas auensis (strain DSM 9187 / NBRC 110442 / TA 4).